The primary structure comprises 234 residues: dTDP-4-amino-4,6-dideoxyglucose formyltransferase (234 aa).

Residues Asn9 and 62-64 (HCK) each bind dTDP-4-amino-4,6-dideoxy-alpha-D-glucose. Position 65–67 (65–67 (QRF)) interacts with (6R)-10-formyltetrahydrofolate. His81 functions as the Proton acceptor in the catalytic mechanism. Residue 90–94 (GWFPQ) coordinates dTDP-4-amino-4,6-dideoxy-alpha-D-glucose. Asp112, Asp116, and Lys175 together coordinate (6R)-10-formyltetrahydrofolate. Asn209 contributes to the dTDP-4-amino-4,6-dideoxy-alpha-D-glucose binding site.

It belongs to the dTDP-Qui4N formyltransferase family. Homodimer.

It carries out the reaction dTDP-4-amino-4,6-dideoxy-alpha-D-glucose + (6R)-10-formyltetrahydrofolate = dTDP-4-formamido-4,6-dideoxy-alpha-D-glucose + (6S)-5,6,7,8-tetrahydrofolate + H(+). Its function is as follows. Sugar N-formyltransferase that catalyzes the conversion of dTDP-4-amino-4,6-dideoxyglucose into dTDP-4-formamido-4,6-dideoxyglucose using N(10)-formyltetrahydrofolate as the carbon source. Plays a role in virulence. In Mycobacterium bovis (strain ATCC BAA-935 / AF2122/97), this protein is dTDP-4-amino-4,6-dideoxyglucose formyltransferase.